Consider the following 429-residue polypeptide: Ribosomal RNA small subunit methyltransferase B (429 aa).

S-adenosyl-L-methionine-binding positions include 254–260 (CSAPGGK), Asp-277, Asp-303, and Asp-322. Catalysis depends on Cys-375, which acts as the Nucleophile. The segment at 397 to 419 (ALSETGTPDQPGQQNLPGGEEGD) is disordered. Over residues 400-412 (ETGTPDQPGQQNL) the composition is skewed to polar residues.

Belongs to the class I-like SAM-binding methyltransferase superfamily. RsmB/NOP family.

The protein resides in the cytoplasm. It carries out the reaction cytidine(967) in 16S rRNA + S-adenosyl-L-methionine = 5-methylcytidine(967) in 16S rRNA + S-adenosyl-L-homocysteine + H(+). In terms of biological role, specifically methylates the cytosine at position 967 (m5C967) of 16S rRNA. In Salmonella dublin (strain CT_02021853), this protein is Ribosomal RNA small subunit methyltransferase B.